A 529-amino-acid chain; its full sequence is Probable biotin-dependent acyl-coenzyme A carboxylase beta2 subunit (529 aa).

Positions 20 to 271 constitute a CoA carboxyltransferase N-terminal domain; sequence MSGKLDEINA…IKQGPAPAPV (252 aa). Residues 270–520 enclose the CoA carboxyltransferase C-terminal domain; the sequence is PVTEPLFDAE…SAIANGPIKG (251 aa).

The protein belongs to the AccD/PCCB family. As to quaternary structure, the biotin-dependent acyl-CoA carboxylase complex is composed of an AccA protein, which contains the biotin carboxylase (BC) and biotin carboxyl carrier protein (BCCP) domains, and an AccD protein, which contains the carboxyl transferase (CT) domain.

Functionally, component of a biotin-dependent acyl-CoA carboxylase complex. This subunit transfers the CO2 from carboxybiotin to the CoA ester substrate. This is Probable biotin-dependent acyl-coenzyme A carboxylase beta2 subunit (accD2) from Mycobacterium tuberculosis (strain ATCC 25618 / H37Rv).